The following is a 490-amino-acid chain: Cytochrome P450 71A21 (490 aa).

A helical membrane pass occupies residues 1-21; it reads MESMTMIILQSLIIFITILFF. Cysteine 432 contributes to the heme binding site.

It belongs to the cytochrome P450 family. Heme is required as a cofactor.

The protein resides in the membrane. The polypeptide is Cytochrome P450 71A21 (CYP71A21) (Arabidopsis thaliana (Mouse-ear cress)).